The chain runs to 544 residues: CTP synthase (544 aa).

Residues 1-265 (MTKFIFVTGG…DNIITEQLQL (265 aa)) are amidoligase domain. Position 13 (Ser13) interacts with CTP. UTP is bound at residue Ser13. ATP is bound by residues 14-19 (SLGKGI) and Asp71. 2 residues coordinate Mg(2+): Asp71 and Glu139. CTP-binding positions include 146–148 (DIE), 186–191 (KTKPTQ), and Lys222. UTP-binding positions include 186–191 (KTKPTQ) and Lys222. Positions 290 to 544 (KIAMVGKYVD…VKAALNNKKA (255 aa)) constitute a Glutamine amidotransferase type-1 domain. Gly353 contributes to the L-glutamine binding site. The active-site Nucleophile; for glutamine hydrolysis is the Cys380. L-glutamine-binding positions include 381-384 (LGMQ), Glu404, and Arg471. Active-site residues include His517 and Glu519.

It belongs to the CTP synthase family. In terms of assembly, homotetramer.

It carries out the reaction UTP + L-glutamine + ATP + H2O = CTP + L-glutamate + ADP + phosphate + 2 H(+). The enzyme catalyses L-glutamine + H2O = L-glutamate + NH4(+). It catalyses the reaction UTP + NH4(+) + ATP = CTP + ADP + phosphate + 2 H(+). It functions in the pathway pyrimidine metabolism; CTP biosynthesis via de novo pathway; CTP from UDP: step 2/2. Allosterically activated by GTP, when glutamine is the substrate; GTP has no effect on the reaction when ammonia is the substrate. The allosteric effector GTP functions by stabilizing the protein conformation that binds the tetrahedral intermediate(s) formed during glutamine hydrolysis. Inhibited by the product CTP, via allosteric rather than competitive inhibition. Its function is as follows. Catalyzes the ATP-dependent amination of UTP to CTP with either L-glutamine or ammonia as the source of nitrogen. Regulates intracellular CTP levels through interactions with the four ribonucleotide triphosphates. This is CTP synthase from Neisseria meningitidis serogroup B (strain ATCC BAA-335 / MC58).